The primary structure comprises 1118 residues: Cytospin-A (1118 aa).

Disordered stretches follow at residues 1-63 (MKKA…AGMA), 75-176 (KKST…NQIS), 294-324 (SLSPEITPGNQSDGGGTLTSSVEGSAPGSVE), and 359-391 (SSDDALDAPSSSESEGVPSIERSRKGSSGNASE). A compositionally biased stretch (low complexity) spans 80-90 (SSAAPSAPAPA). Positions 93–117 (ISENKSKISTGTSSSAKRSTSAGNK) are enriched in polar residues. Basic and acidic residues predominate over residues 120–131 (SSTRERLRERTR). Residues 133 to 145 (NQSKKLPSVSQGA) show a composition bias toward polar residues. Residues 158–171 (TAAEGDIRMSKSKS) show a composition bias toward basic and acidic residues. Positions 168–281 (KSKSDNQISD…LNALGFSLEQ (114 aa)) form a coiled coil. Residues 294-304 (SLSPEITPGNQ) are compositionally biased toward polar residues. Over residues 359–373 (SSDDALDAPSSSESE) the composition is skewed to low complexity. Phosphoserine is present on residues Ser-385, Ser-386, and Ser-390. Coiled-coil stretches lie at residues 395-450 (ACLT…MESL) and 488-808 (RYME…RGRV). 3 positions are modified to phosphoserine: Ser-869, Ser-882, and Ser-888. A disordered region spans residues 921 to 999 (TSSTSRPASL…STRSRIREER (79 aa)). Residues 947–957 (RSSEEMKRDIS) show a composition bias toward basic and acidic residues. A compositionally biased stretch (low complexity) spans 972–992 (TTSPQLSLSSSPTASVTPSTR). In terms of domain architecture, Calponin-homology (CH) spans 1012-1117 (GSKRNALLKW…YVTAIYKYFE (106 aa)).

Belongs to the cytospin-A family. May interact with both microtubules and actin cytoskeleton.

Its subcellular location is the cytoplasm. The protein localises to the cytoskeleton. It is found in the spindle. It localises to the cell junction. The protein resides in the gap junction. In terms of biological role, involved in cytokinesis and spindle organization. May play a role in actin cytoskeleton organization and microtubule stabilization and hence required for proper cell adhesion and migration. This Mus musculus (Mouse) protein is Cytospin-A (Specc1l).